Consider the following 185-residue polypeptide: Elongation factor P (185 aa).

The protein belongs to the elongation factor P family.

It is found in the cytoplasm. It participates in protein biosynthesis; polypeptide chain elongation. Its function is as follows. Involved in peptide bond synthesis. Stimulates efficient translation and peptide-bond synthesis on native or reconstituted 70S ribosomes in vitro. Probably functions indirectly by altering the affinity of the ribosome for aminoacyl-tRNA, thus increasing their reactivity as acceptors for peptidyl transferase. In Bacillus mycoides (strain KBAB4) (Bacillus weihenstephanensis), this protein is Elongation factor P.